The chain runs to 56 residues: Large ribosomal subunit protein bL32 (56 aa).

The interval 1-38 is disordered; it reads MAVQQNKKSRSKRGMRRSHDSLSTAQLSVDATSGELHR. Residues 7–16 are compositionally biased toward basic residues; the sequence is KKSRSKRGMR. Residues 21–31 show a composition bias toward polar residues; that stretch reads SLSTAQLSVDA.

This sequence belongs to the bacterial ribosomal protein bL32 family.

The sequence is that of Large ribosomal subunit protein bL32 from Shewanella woodyi (strain ATCC 51908 / MS32).